The sequence spans 503 residues: Probable cytosol aminopeptidase (503 aa).

Residues Lys-272 and Asp-277 each coordinate Mn(2+). Residue Lys-284 is part of the active site. Asp-295, Asp-354, and Glu-356 together coordinate Mn(2+). Residue Arg-358 is part of the active site.

It belongs to the peptidase M17 family. It depends on Mn(2+) as a cofactor.

The protein resides in the cytoplasm. The catalysed reaction is Release of an N-terminal amino acid, Xaa-|-Yaa-, in which Xaa is preferably Leu, but may be other amino acids including Pro although not Arg or Lys, and Yaa may be Pro. Amino acid amides and methyl esters are also readily hydrolyzed, but rates on arylamides are exceedingly low.. It carries out the reaction Release of an N-terminal amino acid, preferentially leucine, but not glutamic or aspartic acids.. In terms of biological role, presumably involved in the processing and regular turnover of intracellular proteins. Catalyzes the removal of unsubstituted N-terminal amino acids from various peptides. This chain is Probable cytosol aminopeptidase, found in Chlorobium limicola (strain DSM 245 / NBRC 103803 / 6330).